The following is a 244-amino-acid chain: MDDKINKLKEIIKNSNNIVFFGGAGVSTESGIPDFRSANGLFNEKLNITFTPEQLVSHSFFERYPEEFFNFYKAKLIYPNSKPNDAHIALAKLEEMGKLKAIVTQNIDGLHQMAGSKNVFELHGSVLRNYCVDCHTFYDEKFILESKGVPKCTKCGGIVKPDVVLYEEPLDDNVIRGAIDAISKADTLIIGGTSLVVYPAAGLINYYFRGKNLVLINKSSTQADSKADLVINDSIGKVLGKVID.

Positions Met-1 to Asp-244 constitute a Deacetylase sirtuin-type domain. NAD(+) contacts are provided by Ala-24, Thr-28, Phe-35, Arg-36, Gln-105, Ile-107, Asp-108, and His-123. Phe-35 provides a ligand contact to nicotinamide. Positions 107 and 108 each coordinate nicotinamide. His-123 (proton acceptor) is an active-site residue. Zn(2+) contacts are provided by Cys-131, Cys-134, Cys-152, and Cys-155. NAD(+) contacts are provided by Thr-193, Ser-194, Asn-217, and Ile-235.

Belongs to the sirtuin family. Class U subfamily. Zn(2+) serves as cofactor.

The protein resides in the cytoplasm. It catalyses the reaction N(6)-acetyl-L-lysyl-[protein] + NAD(+) + H2O = 2''-O-acetyl-ADP-D-ribose + nicotinamide + L-lysyl-[protein]. NAD-dependent protein deacetylase which modulates the activities of several enzymes which are inactive in their acetylated form. The protein is NAD-dependent protein deacetylase of Clostridium perfringens (strain 13 / Type A).